The chain runs to 349 residues: Phenylalanine--tRNA ligase alpha subunit (349 aa).

Glutamate 258 provides a ligand contact to Mg(2+).

Belongs to the class-II aminoacyl-tRNA synthetase family. Phe-tRNA synthetase alpha subunit type 1 subfamily. As to quaternary structure, tetramer of two alpha and two beta subunits. Requires Mg(2+) as cofactor.

It localises to the cytoplasm. The catalysed reaction is tRNA(Phe) + L-phenylalanine + ATP = L-phenylalanyl-tRNA(Phe) + AMP + diphosphate + H(+). This is Phenylalanine--tRNA ligase alpha subunit from Rickettsia conorii (strain ATCC VR-613 / Malish 7).